The chain runs to 466 residues: Soluble pyridine nucleotide transhydrogenase (466 aa).

36-45 serves as a coordination point for FAD; it reads ERYHNVGGGC.

Belongs to the class-I pyridine nucleotide-disulfide oxidoreductase family. FAD serves as cofactor.

It localises to the cytoplasm. The catalysed reaction is NAD(+) + NADPH = NADH + NADP(+). Its function is as follows. Conversion of NADPH, generated by peripheral catabolic pathways, to NADH, which can enter the respiratory chain for energy generation. This chain is Soluble pyridine nucleotide transhydrogenase, found in Salmonella gallinarum (strain 287/91 / NCTC 13346).